The sequence spans 323 residues: Annexin A5 (323 aa).

Annexin repeat units lie at residues 17–88, 89–160, 172–244, and 248–319; these read FNDK…ALMV, PAHL…SLVQ, GQVE…AVVK, and SIQG…LLCG.

Belongs to the annexin family.

Calcium/phospholipid-binding protein which promotes membrane fusion and is involved in exocytosis. This is Annexin A5 from Cynops pyrrhogaster (Japanese fire-bellied newt).